The following is a 542-amino-acid chain: Chaperonin GroEL (542 aa).

ATP-binding positions include 29–32 (TLGP), 86–90 (DGTTT), glycine 413, 476–478 (NAA), and aspartate 492. Positions 523–542 (EPAAPAMPGGMDPSMMGGMM) are disordered. Positions 526 to 542 (APAMPGGMDPSMMGGMM) are enriched in low complexity.

The protein belongs to the chaperonin (HSP60) family. Forms a cylinder of 14 subunits composed of two heptameric rings stacked back-to-back. Interacts with the co-chaperonin GroES.

The protein resides in the cytoplasm. It catalyses the reaction ATP + H2O + a folded polypeptide = ADP + phosphate + an unfolded polypeptide.. Its function is as follows. Together with its co-chaperonin GroES, plays an essential role in assisting protein folding. The GroEL-GroES system forms a nano-cage that allows encapsulation of the non-native substrate proteins and provides a physical environment optimized to promote and accelerate protein folding. The chain is Chaperonin GroEL from Streptococcus uberis (strain ATCC BAA-854 / 0140J).